Consider the following 623-residue polypeptide: mRNA-capping enzyme (623 aa).

Positions 13–224 (MGLPDRWLHC…IDNGRPSTSQ (212 aa)) are TPase. Residues 44–196 (YDNQIAERRY…YDPTEDDKIL (153 aa)) enclose the Tyrosine-protein phosphatase domain. Cys136 serves as the catalytic Phosphocysteine intermediate. Residues 213–229 (TQIDNGRPSTSQQIPAT) are compositionally biased toward polar residues. A disordered region spans residues 213-243 (TQIDNGRPSTSQQIPATNGNNNQNGNQLSGG). Over residues 230–239 (NGNNNQNGNQ) the composition is skewed to low complexity. The interval 241–585 (SGGGDNSKLF…NPVTETYLIE (345 aa)) is GTase. Catalysis depends on Lys311, which acts as the N6-GMP-lysine intermediate. GTP contacts are provided by residues Arg316, Arg331, 357–359 (DTE), 477–479 (KWK), and 553–558 (RERTDK). The segment at 603–623 (HHQIHQQQLHEGEPEARRQKL) is disordered. Over residues 610-623 (QLHEGEPEARRQKL) the composition is skewed to basic and acidic residues.

It in the N-terminal section; belongs to the non-receptor class of the protein-tyrosine phosphatase family. The protein in the C-terminal section; belongs to the eukaryotic GTase family.

The protein resides in the nucleus. It carries out the reaction a 5'-end triphospho-ribonucleoside in mRNA + H2O = a 5'-end diphospho-ribonucleoside in mRNA + phosphate + H(+). It catalyses the reaction a 5'-end diphospho-ribonucleoside in mRNA + GTP + H(+) = a 5'-end (5'-triphosphoguanosine)-ribonucleoside in mRNA + diphosphate. With respect to regulation, RNA triphosphatase activity is inhibited by magnesium. Bifunctional mRNA-capping enzyme exhibiting RNA 5'-triphosphate monophosphatase activity in the N-terminal part and mRNA guanylyltransferase activity in the C-terminal part. Catalyzes the first two steps of cap formation: by removing the gamma-phosphate from the 5'-triphosphate end of nascent mRNA to yield a diphosphate end, and by transferring the GMP moiety of GTP to the 5'-diphosphate terminus via a covalent enzyme-GMP reaction intermediate. This chain is mRNA-capping enzyme (cel-1), found in Caenorhabditis elegans.